A 258-amino-acid polypeptide reads, in one-letter code: ER membrane protein complex subunit 3 (258 aa).

3 helical membrane-spanning segments follow: residues 8–28 (PALR…IGIL), 123–143 (VVPQ…FILL), and 173–193 (SISW…LLLG).

This sequence belongs to the EMC3 family.

It localises to the cytoplasm. The protein resides in the membrane. This Schizosaccharomyces pombe (strain 972 / ATCC 24843) (Fission yeast) protein is ER membrane protein complex subunit 3.